The following is a 432-amino-acid chain: Enolase (432 aa).

(2R)-2-phosphoglycerate is bound at residue glutamine 167. The active-site Proton donor is glutamate 209. Residues aspartate 246, glutamate 290, and aspartate 317 each contribute to the Mg(2+) site. 4 residues coordinate (2R)-2-phosphoglycerate: lysine 342, arginine 371, serine 372, and lysine 393. Lysine 342 functions as the Proton acceptor in the catalytic mechanism.

It belongs to the enolase family. As to quaternary structure, component of the RNA degradosome, a multiprotein complex involved in RNA processing and mRNA degradation. The cofactor is Mg(2+).

It is found in the cytoplasm. It localises to the secreted. The protein resides in the cell surface. The catalysed reaction is (2R)-2-phosphoglycerate = phosphoenolpyruvate + H2O. The protein operates within carbohydrate degradation; glycolysis; pyruvate from D-glyceraldehyde 3-phosphate: step 4/5. Catalyzes the reversible conversion of 2-phosphoglycerate (2-PG) into phosphoenolpyruvate (PEP). It is essential for the degradation of carbohydrates via glycolysis. In Escherichia coli O139:H28 (strain E24377A / ETEC), this protein is Enolase.